Consider the following 664-residue polypeptide: ATP-dependent zinc metalloprotease FtsH (664 aa).

Over 1–9 (MKQNIKRNW) the chain is Cytoplasmic. Residues 10–30 (IWILIVMIVIGIILYFSIRNL) form a helical membrane-spanning segment. Residues 31–136 (FSTKVAEWSI…KSVATPQPNP (106 aa)) are Extracellular-facing. Residues 137–157 (FLGILISSVPVLILIFVMVWI) traverse the membrane as a helical segment. Topologically, residues 158 to 664 (YRSQVKMMNG…SLIEKTSKKE (507 aa)) are cytoplasmic. Position 229 to 236 (229 to 236 (GPPGTGKT)) interacts with ATP. His-451 contributes to the Zn(2+) binding site. The active site involves Glu-452. Residues His-455 and Asp-529 each coordinate Zn(2+). The segment covering 639 to 649 (IEEKDLSKNSE) has biased composition (basic and acidic residues). Residues 639–664 (IEEKDLSKNSEDNNLDSLIEKTSKKE) form a disordered region.

It in the central section; belongs to the AAA ATPase family. In the C-terminal section; belongs to the peptidase M41 family. Homohexamer. Requires Zn(2+) as cofactor.

The protein localises to the cell membrane. In terms of biological role, acts as a processive, ATP-dependent zinc metallopeptidase for both cytoplasmic and membrane proteins. Plays a role in the quality control of integral membrane proteins. The protein is ATP-dependent zinc metalloprotease FtsH of Mycoplasmopsis synoviae (strain 53) (Mycoplasma synoviae).